The following is a 426-amino-acid chain: Actin-like protein 6B (426 aa).

The segment at 39 to 82 (TTVGLLAAEEGGGLELEGDKEKKGKIFHIDTNALHVPRDGAEVM) is essential for mediating its function in dendritic development; may contribute to neuronal-specific targeting.

Belongs to the actin family. As to quaternary structure, component of the multiprotein chromatin-remodeling complexes SWI/SNF: SWI/SNF-A (BAF), SWI/SNF-B (PBAF) and related complexes. The canonical complex contains a catalytic subunit (either SMARCA4/BRG1/BAF190A or SMARCA2/BRM/BAF190B) and at least SMARCE1, ACTL6A/BAF53, SMARCC1/BAF155, SMARCC2/BAF170 and SMARCB1/SNF5/BAF47. Other subunits specific to each of the complexes may also be present permitting several possible combinations developmentally and tissue specific. Component of the BAF complex, which includes at least actin (ACTB), ARID1A/BAF250A, ARID1B/BAF250B, SMARCA2/BRM, SMARCA4/BRG1/BAF190A, ACTL6A/BAF53, ACTL6B/BAF53B, SMARCE1/BAF57, SMARCC1/BAF155, SMARCC2/BAF170, SMARCB1/SNF5/INI1 and one or more SMARCD1/BAF60A, SMARCD2/BAF60B, or SMARCD3/BAF60C. Component of neuron-specific chromatin remodeling complex (nBAF complex) composed of at least, ARID1A/BAF250A or ARID1B/BAF250B, SMARCD1/BAF60A or SMARCD2/BAF60B or SMARCD3/BAF60C, SMARCA2/BRM/BAF190B, SMARCA4/BRG1/BAF190A, SMARCB1/BAF47, SMARCC1/BAF155, SMARCE1/BAF57, SMARCC2/BAF170, DPF1/BAF45B, DPF3/BAF45C, ACTL6B/BAF53B and actin (ACTB). Note that the nBAF complex is polymorphic in regard to the ATPase, SMARCA2 and SMARCA4 occupying mutually exclusive positions. May be a component of the SWI/SNF-B (PBAF) chromatin remodeling complex, at least composed of SMARCA4/BRG1, SMARCB1/BAF47/SNF5, ACTL6A/BAF53A or ACTL6B/BAF53B, SMARCE1/BAF57, SMARCD1/BAF60A, SMARCD2/BAF60B, perhaps SMARCD3/BAF60C, SMARCC1/BAF155, SMARCC2/BAF170, PBRM1/BAF180, ARID2/BAF200 and actin.

The protein localises to the nucleus. Functionally, involved in transcriptional activation and repression of select genes by chromatin remodeling (alteration of DNA-nucleosome topology). Component of SWI/SNF chromatin remodeling complexes that carry out key enzymatic activities, changing chromatin structure by altering DNA-histone contacts within a nucleosome in an ATP-dependent manner. Belongs to the neuron-specific chromatin remodeling complex (nBAF complex), as such plays a role in remodeling mononucleosomes in an ATP-dependent fashion, and is required for postmitotic neural development and dendritic outgrowth. During neural development a switch from a stem/progenitor to a postmitotic chromatin remodeling mechanism occurs as neurons exit the cell cycle and become committed to their adult state. The transition from proliferating neural stem/progenitor cells to postmitotic neurons requires a switch in subunit composition of the npBAF and nBAF complexes. As neural progenitors exit mitosis and differentiate into neurons, npBAF complexes which contain ACTL6A/BAF53A and PHF10/BAF45A, are exchanged for homologous alternative ACTL6B/BAF53B and DPF1/BAF45B or DPF3/BAF45C subunits in neuron-specific complexes (nBAF). The npBAF complex is essential for the self-renewal/proliferative capacity of the multipotent neural stem cells. The nBAF complex along with CREST plays a role regulating the activity of genes essential for dendrite growth. ACTL6B/BAF53B is not essential for assembly of the nBAF complex but is required for targeting the complex and CREST to the promoter of genes essential for dendritic growth. Essential for neuronal maturation and dendrite development. The sequence is that of Actin-like protein 6B from Homo sapiens (Human).